The following is a 315-amino-acid chain: MGPPKIGQTVVVEVPSTTANIGPGFDCLGAALDLSNQFTIKRIEGNAERFELIMESTEGNHLRGGPENLFYRAAQRVWRTAGVEPVALEARVKLAVPPARGLGSSATAIVAGLVGANALAGYPLPKEKLLELAIDIEGHPDNVVPSLIGGLCVTAKTATDRWRVVRCDWDQSIKAVVAIPSIRLSTSEARRVMPENIPVNDAVINLGALTLLLQGLRTGNEDLIADGMHDKLHEPYRWGLIKGGLEVREAAKAAGALGCAISGAGPSILALCKATKGREVSVAMVKAWEAAGVASRAPLMSLQLTGSECISNTFG.

Residue 97–107 (PPARGLGSSAT) coordinates ATP.

The protein belongs to the GHMP kinase family. Homoserine kinase subfamily.

It is found in the cytoplasm. The enzyme catalyses L-homoserine + ATP = O-phospho-L-homoserine + ADP + H(+). It participates in amino-acid biosynthesis; L-threonine biosynthesis; L-threonine from L-aspartate: step 4/5. In terms of biological role, catalyzes the ATP-dependent phosphorylation of L-homoserine to L-homoserine phosphate. The chain is Homoserine kinase from Prochlorococcus marinus (strain NATL1A).